The sequence spans 187 residues: Resolvase OPG149 (187 aa).

It belongs to the RuvC family. Poxviruses-type subfamily. Requires Mg(2+) as cofactor.

Plays a role in DNA replication by cleaving viral DNA concatamers to yield unit-length viral genomes. The concatamer junctions contain inverted repeat sequences that can be extruded as cruciforms, yielding Holliday junctions that A22 protein cleaves. This Variola virus (isolate Human/India/Ind3/1967) (VARV) protein is Resolvase OPG149 (OPG149).